The chain runs to 1049 residues: Isoleucine--tRNA ligase (1049 aa).

The short motif at 48–58 (PYTTGRIHLGT) is the 'HIGH' region element. Residues 596–600 (KMSKS) carry the 'KMSKS' region motif. Residue K599 coordinates ATP.

It belongs to the class-I aminoacyl-tRNA synthetase family. IleS type 2 subfamily. As to quaternary structure, monomer. Zn(2+) serves as cofactor.

The protein localises to the cytoplasm. It catalyses the reaction tRNA(Ile) + L-isoleucine + ATP = L-isoleucyl-tRNA(Ile) + AMP + diphosphate. Catalyzes the attachment of isoleucine to tRNA(Ile). As IleRS can inadvertently accommodate and process structurally similar amino acids such as valine, to avoid such errors it has two additional distinct tRNA(Ile)-dependent editing activities. One activity is designated as 'pretransfer' editing and involves the hydrolysis of activated Val-AMP. The other activity is designated 'posttransfer' editing and involves deacylation of mischarged Val-tRNA(Ile). This is Isoleucine--tRNA ligase from Methanothrix thermoacetophila (strain DSM 6194 / JCM 14653 / NBRC 101360 / PT) (Methanosaeta thermophila).